Consider the following 181-residue polypeptide: MAILKLEDGTIYTQLHDISRELSSLNIQLNHWPVGDNLETHNLLEKDVLSDDQKEEFLQSVDHYFEELKETAGYQSRDLLAIHPEIPNLDAILSKFDKCHTHADDEARYIVAGICIFGFVRPDDSQVELTLQPQEYINIPANTEHWFYLTPEKRVKAVRYFSSTEGWTPHYTSTEIHFKKS.

Positions 100, 102, 106, and 145 each coordinate Fe(2+). Ni(2+)-binding residues include histidine 100, histidine 102, glutamate 106, and histidine 145.

This sequence belongs to the acireductone dioxygenase (ARD) family. Monomer. It depends on Fe(2+) as a cofactor. Ni(2+) is required as a cofactor.

It carries out the reaction 1,2-dihydroxy-5-(methylsulfanyl)pent-1-en-3-one + O2 = 3-(methylsulfanyl)propanoate + CO + formate + 2 H(+). The enzyme catalyses 1,2-dihydroxy-5-(methylsulfanyl)pent-1-en-3-one + O2 = 4-methylsulfanyl-2-oxobutanoate + formate + 2 H(+). It functions in the pathway amino-acid biosynthesis; L-methionine biosynthesis via salvage pathway; L-methionine from S-methyl-5-thio-alpha-D-ribose 1-phosphate: step 5/6. In terms of biological role, catalyzes 2 different reactions between oxygen and the acireductone 1,2-dihydroxy-3-keto-5-methylthiopentene (DHK-MTPene) depending upon the metal bound in the active site. Fe-containing acireductone dioxygenase (Fe-ARD) produces formate and 2-keto-4-methylthiobutyrate (KMTB), the alpha-ketoacid precursor of methionine in the methionine recycle pathway. Ni-containing acireductone dioxygenase (Ni-ARD) produces methylthiopropionate, carbon monoxide and formate, and does not lie on the methionine recycle pathway. The chain is Acireductone dioxygenase from Trichodesmium erythraeum (strain IMS101).